The chain runs to 349 residues: Isopentenyl-diphosphate delta-isomerase (349 aa).

6–7 (RK) is a binding site for substrate. Residues 62–64 (AMT), S93, and N122 contribute to the FMN site. Q152 serves as a coordination point for substrate. E153 serves as a coordination point for Mg(2+). Residues K184, T214, 258 to 259 (GG), and 280 to 281 (AG) contribute to the FMN site.

Belongs to the IPP isomerase type 2 family. As to quaternary structure, homooctamer. Dimer of tetramers. It depends on FMN as a cofactor. NADPH serves as cofactor. Requires Mg(2+) as cofactor.

Its subcellular location is the cytoplasm. The enzyme catalyses isopentenyl diphosphate = dimethylallyl diphosphate. Functionally, involved in the biosynthesis of isoprenoids. Catalyzes the 1,3-allylic rearrangement of the homoallylic substrate isopentenyl (IPP) to its allylic isomer, dimethylallyl diphosphate (DMAPP). The polypeptide is Isopentenyl-diphosphate delta-isomerase (Bacillus licheniformis (strain ATCC 14580 / DSM 13 / JCM 2505 / CCUG 7422 / NBRC 12200 / NCIMB 9375 / NCTC 10341 / NRRL NRS-1264 / Gibson 46)).